Reading from the N-terminus, the 275-residue chain is Elongation factor Ts (275 aa).

Residues 80 to 83 form an involved in Mg(2+) ion dislocation from EF-Tu region; the sequence is TDFV.

It belongs to the EF-Ts family.

The protein resides in the cytoplasm. Functionally, associates with the EF-Tu.GDP complex and induces the exchange of GDP to GTP. It remains bound to the aminoacyl-tRNA.EF-Tu.GTP complex up to the GTP hydrolysis stage on the ribosome. The protein is Elongation factor Ts of Clavibacter sepedonicus (Clavibacter michiganensis subsp. sepedonicus).